A 1343-amino-acid chain; its full sequence is MVYSYSEKKRIRKDFGKRPKVLDIPYLLSIQLDSFKKFTDQDPTGERGLEAAFRSVFPIKSFSGNSELQYVSYKLGEPVFDVKECQIRGVTYSAPLRVKLRMVLYDREAAAGTVKDIKEQEVYMGDIPLMTDNGTFVINGTERVIVSQLHRSPGVFFDHDRGKTHSSGKVLYNARIIPYRGSWLDFEFDPKDALFVRIDRRRKLPATIMLRALEYSTQEILDLFFERVEFKIKKDTLVMALVPERLRGETASYDIKDAEGSVLVEAGRRITARHIRQLEKTNTTELEVPVEYIVGKYAAQDYIDPDTGEVLVSANSEISLEDLAKLSLAGIKELSTLYINELDHGAYISDTLRIDSTTNRLEALVEIYRMMRPGEPPTKDAAEALFQNLFFSEERYDLSKVGRMKFNRRLSIPDDEGSGVLSKEDIVAVMKNIIHIRNGFDEVDDIDHLGNRRIRSVGEMAENQFRVGLVRVERAVRERLSLGDLNELMPQDLINAKPISAAVKEFFGSSQLSQFMDQNNPLSEVTHKRRISALGPGGLTRERAGFEVRDVHPTHYGRLCPIETPEGPNIGLINSLASFARTNSYGFLETPYRKVIDGVITDEVEYLSAIEEGRYVIAQANIEIDANGRMAEEQIACRHKGESTFMRAADIQYMDVSPQQIISVAASLIPFLEHDDANRALMGANMQRQAVPTLRSEKPLVGTGIERTLAVDSGVVVVAKRGGFVDYVDASRIVVKVNEDELRPGEAGIDIYNLTKYTRSNQNTCINQRPCCSVGEPVVRGDVLADGPSTDLGDLALGQNMRIAFMPWNGYNFEDSILISERVAQEDRFTTIHIQELSCIARDTKLGSEEITADIPNVGESALSKLDESGIVYIGAEVKGGDILVGKVTPKGETQLTPEEKLLRAIFGEKASDVKDSSLRVPNSVKGTIIDVQVFTRDGVEKDKRAVEIEEMHIAQARKDLGEEFKILEEGVLSRARNLLIGAGFSDAQIAALPRKDVLIQVIDDETKQTELEQLAEQHEELKADFDKKFEIKRRKITQGDDLAPGVLKIVKVYLAVKRTIQPGDKMAGRHGNKGVISKICPIEDMPYDEQGNPVDIVLNPLGVPSRMNIGQVLEVHMGAAAKGIGNKITAMLEEQRELAEVRGYIKQVYELGDEVQQRVDIDSFTDDEVLRLATNLKGGIPIATPAFDGAKEKEIKQMLELAGLPTSGQLKLFDGRTGNEFERQVTVGYMYMLKLNHLVDDKMHARSTGSYSLVTQQPLGGKAQFGGQRFGEMEVWALEAYGAAYTLQEMLTVKSDDVNGRTQMYKNIVDGNHQMQPGMPESFNVLLKEIRSLGINIELDQA.

Belongs to the RNA polymerase beta chain family. In terms of assembly, the RNAP catalytic core consists of 2 alpha, 1 beta, 1 beta' and 1 omega subunit. When a sigma factor is associated with the core the holoenzyme is formed, which can initiate transcription.

It catalyses the reaction RNA(n) + a ribonucleoside 5'-triphosphate = RNA(n+1) + diphosphate. In terms of biological role, DNA-dependent RNA polymerase catalyzes the transcription of DNA into RNA using the four ribonucleoside triphosphates as substrates. The protein is DNA-directed RNA polymerase subunit beta of Shewanella baltica (strain OS223).